The following is a 206-amino-acid chain: Outer-membrane lipoprotein LolB (206 aa).

The signal sequence occupies residues 1–21 (MHERNYAVFRLLPLASLLLAA). A lipid anchor (N-palmitoyl cysteine) is attached at C22. The S-diacylglycerol cysteine moiety is linked to residue C22.

This sequence belongs to the LolB family. Monomer.

It localises to the cell outer membrane. Its function is as follows. Plays a critical role in the incorporation of lipoproteins in the outer membrane after they are released by the LolA protein. The chain is Outer-membrane lipoprotein LolB from Sodalis glossinidius (strain morsitans).